Here is a 392-residue protein sequence, read N- to C-terminus: 5-amino-6-(D-ribitylamino)uracil--L-tyrosine 4-hydroxyphenyl transferase (392 aa).

A Radical SAM core domain is found at 60–307 (VTYVVNRNIN…MAIARLYLGK (248 aa)). C74, C78, and C81 together coordinate [4Fe-4S] cluster.

It belongs to the radical SAM superfamily. CofH family. Consists of two subunits, CofG and CofH. Requires [4Fe-4S] cluster as cofactor.

It catalyses the reaction 5-amino-6-(D-ribitylamino)uracil + L-tyrosine + S-adenosyl-L-methionine = 5-amino-5-(4-hydroxybenzyl)-6-(D-ribitylimino)-5,6-dihydrouracil + 2-iminoacetate + 5'-deoxyadenosine + L-methionine + H(+). Its pathway is cofactor biosynthesis; coenzyme F0 biosynthesis. Its function is as follows. Catalyzes the radical-mediated synthesis of 5-amino-5-(4-hydroxybenzyl)-6-(D-ribitylimino)-5,6-dihydrouracil from 5-amino-6-(D-ribitylamino)uracil and L-tyrosine. The protein is 5-amino-6-(D-ribitylamino)uracil--L-tyrosine 4-hydroxyphenyl transferase of Synechocystis sp. (strain ATCC 27184 / PCC 6803 / Kazusa).